We begin with the raw amino-acid sequence, 444 residues long: Glutamate--tRNA ligase 2 (444 aa).

Positions 7–17 (PSPTGYLHVGN) match the 'HIGH' region motif. Positions 240 to 244 (KLSKR) match the 'KMSKS' region motif. Residue Lys-243 participates in ATP binding.

It belongs to the class-I aminoacyl-tRNA synthetase family. Glutamate--tRNA ligase type 1 subfamily. In terms of assembly, monomer.

The protein localises to the cytoplasm. The enzyme catalyses tRNA(Glu) + L-glutamate + ATP = L-glutamyl-tRNA(Glu) + AMP + diphosphate. Catalyzes the attachment of glutamate to tRNA(Glu) in a two-step reaction: glutamate is first activated by ATP to form Glu-AMP and then transferred to the acceptor end of tRNA(Glu). In Gluconobacter oxydans (strain 621H) (Gluconobacter suboxydans), this protein is Glutamate--tRNA ligase 2.